The following is a 244-amino-acid chain: 5-oxoprolinase subunit A (244 aa).

It belongs to the LamB/PxpA family. As to quaternary structure, forms a complex composed of PxpA, PxpB and PxpC.

It carries out the reaction 5-oxo-L-proline + ATP + 2 H2O = L-glutamate + ADP + phosphate + H(+). In terms of biological role, catalyzes the cleavage of 5-oxoproline to form L-glutamate coupled to the hydrolysis of ATP to ADP and inorganic phosphate. In Salmonella dublin (strain CT_02021853), this protein is 5-oxoprolinase subunit A.